The sequence spans 1337 residues: GTPase activating protein homolog 3 (1337 aa).

The F-BAR domain maps to 14–264; it reads PESFADLWDG…LINSINNEDE (251 aa). 2 disordered regions span residues 279 to 328 and 345 to 392; these read PKPF…LPIF and ITNS…RFST. Residues 293–302 are compositionally biased toward pro residues; that stretch reads TPPPPPPPQI. Positions 345–358 are enriched in polar residues; sequence ITNSLSLSSDSLQT. A Rho-GAP domain is found at 422–611; it reads CKIEDIMVAQ…NIIEHFKPLQ (190 aa). Disordered stretches follow at residues 612–689, 733–781, and 794–821; these read VNDS…TTNT, VNNN…HTVA, and ITTP…SPSE. 3 stretches are compositionally biased toward low complexity: residues 621–637, 645–687, and 734–772; these read SSSS…SIES, SSTN…SSTT, and NNNN…QQVS. Residues 830-859 are a coiled coil; the sequence is YLEDQERCKQRIDELHTQVNELYSDITTIE. Disordered stretches follow at residues 1041-1102 and 1114-1166; these read SDPD…INNS and KSAL…AHAI. Over residues 1047–1063 the composition is skewed to polar residues; it reads SPPTISNTTNRLLNTSG. 2 stretches are compositionally biased toward low complexity: residues 1064 to 1102 and 1114 to 1159; these read STDF…INNS and KSAL…TTTN. Residues 1189 to 1219 adopt a coiled-coil conformation; it reads LEINNKLHSQLTEELKKKQQQYKQLIFDIID.

Its subcellular location is the cytoplasm. The protein resides in the contractile vacuole. Functionally, rho GTPase-activating protein involved in the signal transduction pathway. The sequence is that of GTPase activating protein homolog 3 (mgp3) from Dictyostelium discoideum (Social amoeba).